The sequence spans 130 residues: Small ribosomal subunit protein uS9 (130 aa).

Residues leucine 98–arginine 130 are disordered. Over residues lysine 111 to arginine 130 the composition is skewed to basic residues.

The protein belongs to the universal ribosomal protein uS9 family.

This is Small ribosomal subunit protein uS9 from Staphylococcus epidermidis (strain ATCC 35984 / DSM 28319 / BCRC 17069 / CCUG 31568 / BM 3577 / RP62A).